Consider the following 122-residue polypeptide: Small ribosomal subunit protein uS13 (122 aa).

The interval 94–122 (GLPVRGQSTQKNARTRKGPRKTVAGKKGK) is disordered. Over residues 106–122 (ARTRKGPRKTVAGKKGK) the composition is skewed to basic residues.

Belongs to the universal ribosomal protein uS13 family. Part of the 30S ribosomal subunit. Forms a loose heterodimer with protein S19. Forms two bridges to the 50S subunit in the 70S ribosome.

Its function is as follows. Located at the top of the head of the 30S subunit, it contacts several helices of the 16S rRNA. In the 70S ribosome it contacts the 23S rRNA (bridge B1a) and protein L5 of the 50S subunit (bridge B1b), connecting the 2 subunits; these bridges are implicated in subunit movement. Contacts the tRNAs in the A and P-sites. This is Small ribosomal subunit protein uS13 from Mycoplasmopsis synoviae (strain 53) (Mycoplasma synoviae).